The sequence spans 167 residues: UPF0114 protein Tola_1474 (167 aa).

Transmembrane regions (helical) follow at residues 15–35 (IMAPIYLGLSLALLALGIKFF), 53–73 (LILIILSLIDISLVGGLIVMV), 109–129 (VAASIVAISSIHLLKVFMNTE), and 136–156 (IKWYLLIHITFVMSAFAMGYL).

It belongs to the UPF0114 family.

It localises to the cell membrane. The polypeptide is UPF0114 protein Tola_1474 (Tolumonas auensis (strain DSM 9187 / NBRC 110442 / TA 4)).